A 229-amino-acid polypeptide reads, in one-letter code: Ribonuclease T (229 aa).

The Exonuclease domain maps to 23–197 (VIIDVETAGF…YDTERTAKLF (175 aa)). Mg(2+) is bound by residues Asp26, Glu28, His184, and Asp189. The Proton donor/acceptor role is filled by His184.

The protein belongs to the RNase T family. In terms of assembly, homodimer. Mg(2+) is required as a cofactor.

Functionally, trims short 3' overhangs of a variety of RNA species, leaving a one or two nucleotide 3' overhang. Responsible for the end-turnover of tRNA: specifically removes the terminal AMP residue from uncharged tRNA (tRNA-C-C-A). Also appears to be involved in tRNA biosynthesis. The polypeptide is Ribonuclease T (Haemophilus influenzae (strain ATCC 51907 / DSM 11121 / KW20 / Rd)).